The primary structure comprises 614 residues: MNSPGGRGKKKGSGGPSSPVPPRPPPPCQARSRPAPKPAPPPQSPHKRNLYYFSYPLFLGFALLRLVAFHLGLLFVWLCQRFSRALMAAKRSSGAAPASASPPAPVPGGEAERVRAFHKQAFEYISVALRIDEDEKVGQKDQAVEWYKKGIEELEKGIAVVVTGQGEQCERARRLQAKMMTNLVMAKDRLQLLEKLQPSLQFSKSQTDVYNDSTNLTCRNGHLQSESGAVPKRKDPLTHASNSLPRSKTVMKTGPTGLSGHHRAPSCSGLSMVSGVRQGPGSAAATHKSTPKTNRTNKPSTPTTAARKKKDLKNFRNVDSNLANLIMNEIVDNGTAVKFDDIAGQELAKQALQEIVILPSLRPELFTGLRAPARGLLLFGPPGNGKTMLAKAVAAESNATFFNISAASLTSKYVGEGEKLVRALFAVARELQPSIIFIDEVDSLLCERREGEHDASRRLKTEFLIEFDGVQSAGDDRVLVMGATNRPQELDEAVLRRFTKRVYVSLPNEETRLLLLKNLLCKQGSPLTQKELAQLARMTNGYSGSDLTALAKDAALGPIRELKPEQVKNMSASEMRNIRLSDFTESLKKIKRSVSPQTLEAYIRWNKDFGDTTV.

The disordered stretch occupies residues 1 to 45; it reads MNSPGGRGKKKGSGGPSSPVPPRPPPPCQARSRPAPKPAPPPQSP. The tract at residues 1–50 is required for nuclear localization; sequence MNSPGGRGKKKGSGGPSSPVPPRPPPPCQARSRPAPKPAPPPQSPHKRNL. Over 1-56 the chain is Cytoplasmic; it reads MNSPGGRGKKKGSGGPSSPVPPRPPPPCQARSRPAPKPAPPPQSPHKRNLYYFSYP. Residues 1–80 form a required for interaction with ATL1 region; it reads MNSPGGRGKK…LGLLFVWLCQ (80 aa). Residues 1–192 form a required for midbody localization region; it reads MNSPGGRGKK…LVMAKDRLQL (192 aa). Positions 1–298 are required for interaction with RTN1; sequence MNSPGGRGKK…STPKTNRTNK (298 aa). The short motif at 4 to 11 is the Nuclear localization signal element; it reads PGGRGKKK. 2 stretches are compositionally biased toward pro residues: residues 18 to 28 and 35 to 44; these read SPVPPRPPPPC and APKPAPPPQS. Residues 50–87 form a required for interaction with SSNA1 and microtubules region; it reads LYYFSYPLFLGFALLRLVAFHLGLLFVWLCQRFSRALM. The helical intramembrane region spans 57–77; sequence LFLGFALLRLVAFHLGLLFVW. A Nuclear export signal motif is present at residues 59 to 67; sequence LGFALLRLV. Over 78–614 the chain is Cytoplasmic; it reads LCQRFSRALM…WNKDFGDTTV (537 aa). Residues 110-194 are sufficient for interaction with CHMP1B; sequence EAERVRAFHK…MAKDRLQLLE (85 aa). The tract at residues 112 to 198 is required for interaction with microtubules; sequence ERVRAFHKQA…RLQLLEKLQP (87 aa). Positions 118-193 constitute an MIT domain; that stretch reads HKQAFEYISV…VMAKDRLQLL (76 aa). The interval 220 to 310 is disordered; the sequence is NGHLQSESGA…TPTTAARKKK (91 aa). The tract at residues 226–614 is sufficient for microtubule severing; sequence ESGAVPKRKD…WNKDFGDTTV (389 aa). Phosphoserine is present on residues S243 and S266. The required for interaction with microtubules and microtubule severing stretch occupies residues 268–326; it reads SGLSMVSGVRQGPGSAAATHKSTPKTNRTNKPSTPTTAARKKKDLKNFRNVDSNLANLI. The segment covering 287-304 has biased composition (polar residues); that stretch reads HKSTPKTNRTNKPSTPTT. Residue T304 is modified to Phosphothreonine. The Nuclear localization signal signature appears at 307–310; sequence RKKK. 380-387 lines the ATP pocket; the sequence is GPPGNGKT. At S595 the chain carries Phosphoserine.

This sequence belongs to the AAA ATPase family. Spastin subfamily. In terms of assembly, homohexamer. Mostly monomeric, but assembles into hexameric structure for short periods of time. Oligomerization seems to be a prerequisite for catalytic activity. Binding to ATP in a cleft between two adjacent subunits stabilizes the homohexameric form. Binds to microtubules at least in part via the alpha-tubulin and beta-tubulin tails. The hexamer adopts a ring conformation through which microtubules pass prior to being severed. Does not interact strongly with tubulin heterodimers. Interacts (via MIT domain) with CHMP1B; the interaction is direct. Interacts with SSNA1. Interacts with ATL1. Interacts with RTN1. Interacts with ZFYVE27. Interacts with REEP1. Interacts (via MIT domain) with IST1.

The protein localises to the membrane. It is found in the endoplasmic reticulum. Its subcellular location is the midbody. The protein resides in the cytoplasm. It localises to the cytoskeleton. The protein localises to the microtubule organizing center. It is found in the centrosome. Its subcellular location is the perinuclear region. The protein resides in the nucleus. It localises to the spindle. The protein localises to the cell projection. It is found in the axon. The catalysed reaction is n ATP + n H2O + a microtubule = n ADP + n phosphate + (n+1) alpha/beta tubulin heterodimers.. With respect to regulation, allosteric enzyme with a cooperative mechanism; at least two neighbor subunits influence each other strongly in spastin hexamers. Microtubule binding promotes cooperative interactions among spastin subunits. Functionally, ATP-dependent microtubule severing protein that specifically recognizes and cuts microtubules that are polyglutamylated. Preferentially recognizes and acts on microtubules decorated with short polyglutamate tails: severing activity increases as the number of glutamates per tubulin rises from one to eight, but decreases beyond this glutamylation threshold. Severing activity is not dependent on tubulin acetylation or detyrosination. Microtubule severing promotes reorganization of cellular microtubule arrays and the release of microtubules from the centrosome following nucleation. It is critical for the biogenesis and maintenance of complex microtubule arrays in axons, spindles and cilia. SPAST is involved in abscission step of cytokinesis and nuclear envelope reassembly during anaphase in cooperation with the ESCRT-III complex. Recruited at the midbody, probably by IST1, and participates in membrane fission during abscission together with the ESCRT-III complex. Recruited to the nuclear membrane by IST1 and mediates microtubule severing, promoting nuclear envelope sealing and mitotic spindle disassembly during late anaphase. Required for membrane traffic from the endoplasmic reticulum (ER) to the Golgi and endosome recycling. Recruited by IST1 to endosomes and regulates early endosomal tubulation and recycling by mediating microtubule severing. Probably plays a role in axon growth and the formation of axonal branches. This Bos taurus (Bovine) protein is Spastin.